The sequence spans 1203 residues: DNA-directed RNA polymerase I subunit RPA135 (1203 aa).

An N-acetylserine modification is found at Ser2. The residue at position 81 (Ser81) is a Phosphoserine. The segment at 1104-1131 adopts a C4-type zinc-finger fold; it reads CRECGSILTTQQSVPRIGSISTVCCRRC. Ser1156 is subject to Phosphoserine.

The protein belongs to the RNA polymerase beta chain family. As to quaternary structure, component of the RNA polymerase I (Pol I) complex consisting of 14 subunits: RPA135, RPA190, RPC40, RPA14, RPB5, RPO26, RPA43, RPB8, RPA12, RPB10, RPC19, RPC10, RPA49 and RPA34. The complex is composed of a horseshoe-shaped core containing ten subunits (RPA135, RPA190, RPB5, RPO26, RPB8, RPB10, RPC10, RPA12, RPC19 and RPC40) where RPA135 and RPA190 form the DNA-binding cleft. Outside of the core, RPA14 and RPA43 form the stalk that mediates interactions with transcription initiation factors and newly synthesized RNA.

It localises to the nucleus. The protein resides in the nucleolus. It carries out the reaction RNA(n) + a ribonucleoside 5'-triphosphate = RNA(n+1) + diphosphate. Functionally, DNA-dependent RNA polymerases catalyze the transcription of DNA into RNA using the four ribonucleoside triphosphates as substrates. Component of RNA polymerase I (Pol I) which synthesizes ribosomal RNA precursors. Besides, RNA polymerase I has intrinsic RNA cleavage activity. RPA190 and RPA135 both contribute to the polymerase catalytic activity and together form the Pol I active center. In addition, subunit RPA12 contributes a catalytic zinc ribbon that is required for RNA cleavage by Pol I. A single stranded DNA template strand of the promoter is positioned within the central active site cleft of Pol I. A bridging helix emanates from RPA190 and crosses the cleft near the catalytic site and is thought to promote translocation of Pol I by acting as a ratchet that moves the RNA-DNA hybrid through the active site by switching from straight to bent conformations at each step of nucleotide addition. This chain is DNA-directed RNA polymerase I subunit RPA135 (RPA135), found in Saccharomyces cerevisiae (strain ATCC 204508 / S288c) (Baker's yeast).